The primary structure comprises 181 residues: Large ribosomal subunit protein uL5 (181 aa).

This sequence belongs to the universal ribosomal protein uL5 family. Part of the 50S ribosomal subunit; part of the 5S rRNA/L5/L18/L25 subcomplex. Contacts the 5S rRNA and the P site tRNA. Forms a bridge to the 30S subunit in the 70S ribosome.

Its function is as follows. This is one of the proteins that bind and probably mediate the attachment of the 5S RNA into the large ribosomal subunit, where it forms part of the central protuberance. In the 70S ribosome it contacts protein S13 of the 30S subunit (bridge B1b), connecting the 2 subunits; this bridge is implicated in subunit movement. Contacts the P site tRNA; the 5S rRNA and some of its associated proteins might help stabilize positioning of ribosome-bound tRNAs. The chain is Large ribosomal subunit protein uL5 from Baumannia cicadellinicola subsp. Homalodisca coagulata.